The primary structure comprises 469 residues: Acyltransferase clz18 (469 aa).

7 consecutive transmembrane segments (helical) span residues 21 to 41, 70 to 90, 134 to 154, 253 to 273, 346 to 366, 391 to 411, and 424 to 444; these read GLLS…LGYD, LFTI…CLFF, LSLL…TGFF, ILAA…PLFW, GLIV…LYSL, IYLI…SWVW, and VGFG…AAIF.

This sequence belongs to the acyltransferase 3 family.

The protein resides in the membrane. It functions in the pathway secondary metabolite biosynthesis. In terms of biological role, acyltransferase; part of the gene cluster that mediates the biosynthesis of squalestatin S1 (SQS1, also known as zaragozic acid A), a heavily oxidized fungal polyketide that offers potent cholesterol lowering activity by targeting squalene synthase (SS). SQS1 is composed of a 2,8-dioxobicyclic[3.2.1]octane-3,4,5-tricarboxyclic acid core that is connected to two lipophilic polyketide arms. These initial steps feature the priming of an unusual benzoic acid starter unit onto the highly reducing polyketide synthase clz14, followed by oxaloacetate extension and product release to generate a tricarboxylic acid containing product. The phenylalanine ammonia lyase (PAL) clz10 and the acyl-CoA ligase clz12 are involved in transforming phenylalanine into benzoyl-CoA. The citrate synthase-like protein clz17 is involved in connecting the C-alpha-carbons of the hexaketide chain and oxaloacetate to afford the tricarboxylic acid unit. The potential hydrolytic enzymes, clz11 and clz13, are in close proximity to pks2 and may participate in product release. On the other side, the tetraketide arm is synthesized by a the squalestatin tetraketide synthase clz2 and enzymatically esterified to the core in the last biosynthetic step, by the acetyltransferase clz6. The biosynthesis of the tetraketide must involve 3 rounds of chain extension. After the first and second rounds methyl-transfer occurs, and in all rounds of extension the ketoreductase and dehydratase are active. The enoyl reductase and C-MeT of clz2 are not active in the final round of extension. The acetyltransferase clz6 appears to have a broad substrate selectivity for its acyl CoA substrate, allowing the in vitro synthesis of novel squalestatins. The biosynthesis of SQS1 requires several oxidative steps likely performed by oxidoreductases clz3, clz15 and clz16. Finally, in support of the identification of the cluster as being responsible for SQS1 production, the cluster contains a gene encoding a putative squalene synthase (SS) clz20, suggesting a likely mechanism for self-resistance. This Cochliobolus lunatus (Filamentous fungus) protein is Acyltransferase clz18.